The sequence spans 238 residues: Large ribosomal subunit protein uL1 (238 aa).

Belongs to the universal ribosomal protein uL1 family. In terms of assembly, part of the 50S ribosomal subunit.

In terms of biological role, binds directly to 23S rRNA. The L1 stalk is quite mobile in the ribosome, and is involved in E site tRNA release. Functionally, protein L1 is also a translational repressor protein, it controls the translation of the L11 operon by binding to its mRNA. The polypeptide is Large ribosomal subunit protein uL1 (Rippkaea orientalis (strain PCC 8801 / RF-1) (Cyanothece sp. (strain PCC 8801))).